A 278-amino-acid polypeptide reads, in one-letter code: Transmembrane protein 41B (278 aa).

Residues 1–31 form a disordered region; sequence MQVHERSHTGGHTFQCNHGNEKKAPAAGKVH. 6 consecutive transmembrane segments (helical) span residues 39-59, 96-116, 142-162, 184-204, 212-232, and 249-269; these read MSLLILVSIFLCAASVMFLVY, FYVEVLVAYFTTYIFLQTFAI, CSGLGASFCYLLSYLVGRPVV, LINYIIFLRITPFLPNWFINI, PLKVFFLGTFIGVAPPSFVAI, and SWNSVIILMVLAVLSILPAIF. Positions 127–238 are VTT domain; required for its function in autophagy; it reads GFLYPFPLAL…FVAIKAGTTL (112 aa).

The protein belongs to the TMEM41 family.

The protein localises to the endoplasmic reticulum membrane. The protein resides in the endomembrane system. The enzyme catalyses a 1,2-diacyl-sn-glycero-3-phospho-L-serine(in) = a 1,2-diacyl-sn-glycero-3-phospho-L-serine(out). It carries out the reaction cholesterol(in) = cholesterol(out). The catalysed reaction is a 1,2-diacyl-sn-glycero-3-phosphocholine(in) = a 1,2-diacyl-sn-glycero-3-phosphocholine(out). It catalyses the reaction a 1,2-diacyl-sn-glycero-3-phosphoethanolamine(in) = a 1,2-diacyl-sn-glycero-3-phosphoethanolamine(out). Its function is as follows. Phospholipid scramblase involved in lipid homeostasis and membrane dynamics processes. Has phospholipid scramblase activity toward cholesterol and phosphatidylserine, as well as phosphatidylethanolamine and phosphatidylcholine. Required for autophagosome formation: participates in early stages of autophagosome biogenesis at the endoplasmic reticulum (ER) membrane by reequilibrating the leaflets of the ER as lipids are extracted by atg2 (atg2a or atg2b) to mediate autophagosome assembly. In addition to autophagy, involved in other processes in which phospholipid scramblase activity is required. Required for normal motor neuron development. This Xenopus laevis (African clawed frog) protein is Transmembrane protein 41B.